The following is a 139-amino-acid chain: Putative translationally-controlled tumor protein-like protein TPT1P8 (139 aa).

The TCTP domain maps to 1 to 139; that stretch reads MIIFQDLISH…KTTSSLLVKT (139 aa). Residues 40-51 show a composition bias toward polar residues; the sequence is TGNTDDSLIGRN. The disordered stretch occupies residues 40-60; the sequence is TGNTDDSLIGRNSSSESTEDE.

It belongs to the TCTP family.

This Homo sapiens (Human) protein is Putative translationally-controlled tumor protein-like protein TPT1P8 (TPT1P8).